The sequence spans 422 residues: Phytoene synthase 1, chloroplastic (422 aa).

A chloroplast-targeting transit peptide spans 1–70 (MSSSVAVLWV…NRSRRIGVVS (70 aa)).

It belongs to the phytoene/squalene synthase family. In terms of assembly, monomer. Interacts with OR. Interacts with ORLIKE.

The protein localises to the plastid. The protein resides in the chloroplast membrane. The catalysed reaction is 2 (2E,6E,10E)-geranylgeranyl diphosphate = 15-cis-phytoene + 2 diphosphate. It participates in carotenoid biosynthesis; phytoene biosynthesis; all-trans-phytoene from geranylgeranyl diphosphate: step 1/1. Its function is as follows. Catalyzes the reaction from prephytoene diphosphate to phytoene. The sequence is that of Phytoene synthase 1, chloroplastic from Arabidopsis thaliana (Mouse-ear cress).